A 958-amino-acid chain; its full sequence is Glycine dehydrogenase (decarboxylating) (958 aa).

Lys-705 is modified (N6-(pyridoxal phosphate)lysine).

Belongs to the GcvP family. As to quaternary structure, the glycine cleavage system is composed of four proteins: P, T, L and H. It depends on pyridoxal 5'-phosphate as a cofactor.

The catalysed reaction is N(6)-[(R)-lipoyl]-L-lysyl-[glycine-cleavage complex H protein] + glycine + H(+) = N(6)-[(R)-S(8)-aminomethyldihydrolipoyl]-L-lysyl-[glycine-cleavage complex H protein] + CO2. The glycine cleavage system catalyzes the degradation of glycine. The P protein binds the alpha-amino group of glycine through its pyridoxal phosphate cofactor; CO(2) is released and the remaining methylamine moiety is then transferred to the lipoamide cofactor of the H protein. This chain is Glycine dehydrogenase (decarboxylating), found in Bdellovibrio bacteriovorus (strain ATCC 15356 / DSM 50701 / NCIMB 9529 / HD100).